A 334-amino-acid polypeptide reads, in one-letter code: G2/mitotic-specific cyclin-1 (334 aa).

This sequence belongs to the cyclin family. Cyclin AB subfamily.

Functionally, essential for the control of the cell cycle at the G2/M (mitosis) transition. The chain is G2/mitotic-specific cyclin-1 (CYC1) from Trypanosoma brucei brucei.